The sequence spans 137 residues: Cucumber peeling cupredoxin (137 aa).

Q1 carries the post-translational modification Pyrrolidone carboxylic acid. One can recognise a Phytocyanin domain in the interval 3–107 (TVHIVGDNTG…GQKLSINVVA (105 aa)). Cu cation-binding residues include H46, C89, H94, and Q99. C60 and C95 are disulfide-bonded. N109 is a glycosylation site (N-linked (GlcNAc...) asparagine). The segment at 112 to 137 (VSMPPPSSSPPSSVMPPPVMPPPSPS) is disordered. Over residues 114-137 (MPPPSSSPPSSVMPPPVMPPPSPS) the composition is skewed to pro residues. 4-hydroxyproline; partial is present on P115. 4 positions are modified to 4-hydroxyproline: P116, P117, P121, and P122. P127 bears the 4-hydroxyproline; partial mark. 5 positions are modified to 4-hydroxyproline: P128, P129, P133, P134, and P136.

This is Cucumber peeling cupredoxin from Cucumis sativus (Cucumber).